Here is a 395-residue protein sequence, read N- to C-terminus: Phosphoglycerate kinase (395 aa).

Residues 22–24 (DLN), R37, 60–63 (HFGR), R116, and R149 each bind substrate. Residues K199, E322, and 352-355 (GGDT) each bind ATP.

It belongs to the phosphoglycerate kinase family. In terms of assembly, monomer.

It localises to the cytoplasm. It catalyses the reaction (2R)-3-phosphoglycerate + ATP = (2R)-3-phospho-glyceroyl phosphate + ADP. Its pathway is carbohydrate degradation; glycolysis; pyruvate from D-glyceraldehyde 3-phosphate: step 2/5. The polypeptide is Phosphoglycerate kinase (Novosphingobium aromaticivorans (strain ATCC 700278 / DSM 12444 / CCUG 56034 / CIP 105152 / NBRC 16084 / F199)).